Here is a 315-residue protein sequence, read N- to C-terminus: Beta-ketoacyl-[acyl-carrier-protein] synthase III (315 aa).

Catalysis depends on residues C115 and H244. The tract at residues 245 to 249 (QANAR) is ACP-binding. N274 is a catalytic residue.

The protein belongs to the thiolase-like superfamily. FabH family. In terms of assembly, homodimer.

The protein resides in the cytoplasm. The enzyme catalyses malonyl-[ACP] + acetyl-CoA + H(+) = 3-oxobutanoyl-[ACP] + CO2 + CoA. The protein operates within lipid metabolism; fatty acid biosynthesis. Functionally, catalyzes the condensation reaction of fatty acid synthesis by the addition to an acyl acceptor of two carbons from malonyl-ACP. Catalyzes the first condensation reaction which initiates fatty acid synthesis and may therefore play a role in governing the total rate of fatty acid production. Possesses both acetoacetyl-ACP synthase and acetyl transacylase activities. Its substrate specificity determines the biosynthesis of branched-chain and/or straight-chain of fatty acids. This Rubrobacter xylanophilus (strain DSM 9941 / JCM 11954 / NBRC 16129 / PRD-1) protein is Beta-ketoacyl-[acyl-carrier-protein] synthase III.